A 5233-amino-acid polypeptide reads, in one-letter code: E3 ubiquitin-protein ligase highwire (5233 aa).

The interval 197 to 230 (VVGGPGLPAEKRPRRDSANSDADSDTEEPTEREP) is disordered. Residues 205–214 (AEKRPRRDSA) show a composition bias toward basic and acidic residues. Residues Ser-213 and Ser-216 each carry the phosphoserine modification. RCC1 repeat units follow at residues 615-666 (NGRV…ALLV), 669-724 (DGTV…FVTK), and 768-818 (KGQL…DKRL). Residues 680–700 (RGEDGDSSKNRRQPKAVKPKK) form a disordered region. Residues 689–700 (NRRQPKAVKPKK) are compositionally biased toward basic residues. The interval 900–950 (TELKPPPSDVQQRQQRSKTLIMRRKERKGELETGAAGGGAATPTDLDKDPP) is disordered. The segment covering 908 to 917 (DVQQRQQRSK) has biased composition (polar residues). RCC1 repeat units lie at residues 931-983 (ETGA…VLTL), 984-1033 (AGEV…LLTS), and 1035-1084 (GMVY…TVAP). Disordered stretches follow at residues 1051–1109 (LPSD…EMPP) and 1287–1327 (AAAA…PPQL). Polar residues predominate over residues 1092–1103 (RSQSPANVQPSG). Positions 1287–1302 (AAAAAVAAPGTPVSAG) are enriched in low complexity. Residues 1436 to 1587 (NRFDNFGGGW…GQIPAILYRL (152 aa)) form a PHR domain 1 region. Residues 1681 to 1718 (SSTSVATGGGSNAAHGSGVVTTAKSVQSKPNKDKNTPR) form a disordered region. Over residues 1699-1709 (VVTTAKSVQSK) the composition is skewed to polar residues. Residues 2014 to 2169 (ARFARCDVSR…GQLPCILYYS (156 aa)) are PHR domain 2. Disordered stretches follow at residues 2329 to 2353 (SADL…VPIN) and 2580 to 2604 (NGAG…NTHQ). The span at 2336 to 2350 (QSQSVSQSQSQSQSV) shows a compositional bias: low complexity. Residues 2885 to 4082 (AEVSAPGPNL…FVSSLNPTGG (1198 aa)) form a required for interaction with Rae1 region. One copy of the Filamin repeat lies at 2906-3000 (WGGMAPPPRI…LEEVYRVDVK (95 aa)). Disordered stretches follow at residues 3005–3024 (PPPT…SKLR), 3117–3210 (KGVG…EPEQ), 3277–3333 (GGQD…ASET), 3348–3378 (TTTG…PMGP), 3551–3587 (PRLL…DLGR), and 3901–3936 (ASLA…APPV). Over residues 3176-3191 (KHADLAEREAQVQEER) the composition is skewed to basic and acidic residues. The span at 3192–3210 (EKEEEQVDDEDADDREPEQ) shows a compositional bias: acidic residues. The segment covering 3282–3292 (PRGNGNRSQQE) has biased composition (polar residues). The segment covering 3348–3371 (TTTGQGEQQSELQLATTSTASSAS) has biased composition (low complexity). A compositionally biased stretch (low complexity) spans 3917 to 3932 (QHHQQQQMNLQLQQHQ). The region spanning 4195–4374 (HNQVHSVATG…KHQPHLRLSH (180 aa)) is the DOC domain. Disordered regions lie at residues 4633 to 4655 (ASTG…GAVL) and 4680 to 4702 (LRSR…ALPP). Positions 4638-4652 (SGSGGVSGSSSGNGG) are enriched in gly residues. Residues Cys-4991, Cys-4994, Cys-5009, His-5011, His-5014, Cys-5017, Cys-5038, Cys-5041, Cys-5101, and Cys-5104 each coordinate Zn(2+). The segment at 4991 to 5042 (CMICFVEALSCAPSIHLECGHVFHYHCCKAVLEKRWSGPRITFGFSLCPICK) adopts an RING-type; atypical zinc-finger fold. The tandem cysteine domain stretch occupies residues 5096 to 5231 (YAYYVCFKCQ…LGCGVCRNAQ (136 aa)). Cys-5115 is an active-site residue. Residues Cys-5130, Cys-5133, Cys-5142, His-5145, Cys-5154, Cys-5157, and Cys-5158 each contribute to the Zn(2+) site. The active site involves Cys-5165. Residues Cys-5172, Cys-5175, Cys-5193, Cys-5207, His-5213, Cys-5224, and Cys-5227 each contribute to the Zn(2+) site.

The protein belongs to the RING-Cys relay (RCR) family. Component of an E3 ubiquitin ligase complex composed of hiw, Rae1 and Fsn. Interacts with Rae1; the interaction with Rae1 may protect hiw from autophagy-mediated degradation. Express throughout the nervous system. Stage 13 embryos show expression in the central nervous system (CNS) at the longitudinal axon tracts around which the synaptic neuropil forms. Expression outside the CNS starts at stage 16 in presynaptic terminals at the periactive zone which surround the active zone. Expression at neuromuscular junctions (NMJ) and in the CNS is also seen in third instar larvae (at protein level).

The protein localises to the synapse. It is found in the cell projection. The protein resides in the axon. It carries out the reaction [E2 ubiquitin-conjugating enzyme]-S-ubiquitinyl-L-cysteine + [acceptor protein]-L-threonine = [E2 ubiquitin-conjugating enzyme]-L-cysteine + [acceptor protein]-3-O-ubiquitinyl-L-threonine.. It functions in the pathway protein modification; protein ubiquitination. Its function is as follows. Atypical E3 ubiquitin-protein ligase which specifically mediates ubiquitination of threonine and serine residues on target proteins, instead of ubiquitinating lysine residues. Shows esterification activity towards both threonine and serine, with a preference for threonine, and acts via two essential catalytic cysteine residues that relay ubiquitin to its substrate via thioester intermediates. Required in the presynaptic motoneuron to down-regulate the levels of wnd and restrain synaptic terminal growth at the neuromuscular junction (NMJ) together with Rae1 and Fsn. This is E3 ubiquitin-protein ligase highwire from Drosophila melanogaster (Fruit fly).